A 435-amino-acid chain; its full sequence is Tol-Pal system protein TolB (435 aa).

Positions 1–20 are cleaved as a signal peptide; sequence MRKIIAGVFIFVFLISNLYA.

The protein belongs to the TolB family. As to quaternary structure, the Tol-Pal system is composed of five core proteins: the inner membrane proteins TolA, TolQ and TolR, the periplasmic protein TolB and the outer membrane protein Pal. They form a network linking the inner and outer membranes and the peptidoglycan layer.

Its subcellular location is the periplasm. Functionally, part of the Tol-Pal system, which plays a role in outer membrane invagination during cell division and is important for maintaining outer membrane integrity. The polypeptide is Tol-Pal system protein TolB (Francisella tularensis subsp. mediasiatica (strain FSC147)).